The sequence spans 352 residues: Protein RecA (352 aa).

Residue 68-75 (GPESSGKT) participates in ATP binding.

Belongs to the RecA family.

It localises to the cytoplasm. Functionally, can catalyze the hydrolysis of ATP in the presence of single-stranded DNA, the ATP-dependent uptake of single-stranded DNA by duplex DNA, and the ATP-dependent hybridization of homologous single-stranded DNAs. It interacts with LexA causing its activation and leading to its autocatalytic cleavage. The sequence is that of Protein RecA from Clostridium perfringens (strain ATCC 13124 / DSM 756 / JCM 1290 / NCIMB 6125 / NCTC 8237 / Type A).